A 126-amino-acid chain; its full sequence is Small ribosomal subunit protein uS13 (126 aa).

The tract at residues 91–126 (RHRRGLPVRGQRTSTNARTRKGPRRAIAGKKKPGKK) is disordered. Over residues 108–126 (RTRKGPRRAIAGKKKPGKK) the composition is skewed to basic residues.

The protein belongs to the universal ribosomal protein uS13 family. Part of the 30S ribosomal subunit. Forms a loose heterodimer with protein S19. Forms two bridges to the 50S subunit in the 70S ribosome.

Functionally, located at the top of the head of the 30S subunit, it contacts several helices of the 16S rRNA. In the 70S ribosome it contacts the 23S rRNA (bridge B1a) and protein L5 of the 50S subunit (bridge B1b), connecting the 2 subunits; these bridges are implicated in subunit movement. Contacts the tRNAs in the A and P-sites. The protein is Small ribosomal subunit protein uS13 of Streptomyces coelicolor (strain ATCC BAA-471 / A3(2) / M145).